The following is a 667-amino-acid chain: Smc-like protein Sph2 (667 aa).

Coiled coils occupy residues 153–295 and 355–517; these read GSIQ…SLAT and GRLD…AITA.

The protein belongs to the Sph1/Sph2 family.

It is found in the cytoplasm. Functionally, may play a role in replication. This Halobacterium salinarum (strain ATCC 29341 / DSM 671 / R1) protein is Smc-like protein Sph2 (sph2).